The following is a 413-amino-acid chain: uncharacterized protein (413 aa).

Residues 25 to 47 (IVNLSALLPLITSTTSTAGSIIT) traverse the membrane as a helical segment.

It is found in the host membrane. This is an uncharacterized protein from Acidianus sp. F28 (AFV-2).